A 500-amino-acid chain; its full sequence is NAD(P)H-quinone oxidoreductase chain 4, chloroplastic (500 aa).

14 helical membrane passes run 4 to 24 (FPWLTIIVVFPISAGSLMLFL), 35 to 55 (YTICICILELLLTTYAFCYNF), 87 to 107 (IGTILLTGFITTLATLAAFPV), 113 to 130 (LFHFLMLAMYSGQIGSFS), 134 to 154 (LLLFFIMWELELIPVYLLLSM), 167 to 187 (FILYTAGSSIFLLIGVLGISL), 211 to 231 (ILFYIGFLIAFAVKSPIIPLH), 242 to 262 (HYSTCMLLAGILLKMGAYGLV), 272 to 292 (AHSMFSPWLMVVGTIQIIYAA), 305 to 325 (IAYSSVSHMGFIIIGISSITD), 330 to 350 (GAILQIISHGFIGAALFFLAG), 386 to 406 (LALPGMSGFVAELIVFFGIIT), 416 to 436 (ILIIFVMAIGMILTPIYLLSM), and 462 to 482 (LFLSISILLPIIGIGIYPDFV).

This sequence belongs to the complex I subunit 4 family.

The protein resides in the plastid. It localises to the chloroplast thylakoid membrane. The catalysed reaction is a plastoquinone + NADH + (n+1) H(+)(in) = a plastoquinol + NAD(+) + n H(+)(out). It carries out the reaction a plastoquinone + NADPH + (n+1) H(+)(in) = a plastoquinol + NADP(+) + n H(+)(out). The chain is NAD(P)H-quinone oxidoreductase chain 4, chloroplastic from Nasturtium officinale (Watercress).